The following is a 287-amino-acid chain: Ribosomal RNA small subunit methyltransferase A (287 aa).

6 residues coordinate S-adenosyl-L-methionine: asparagine 28, leucine 30, glycine 55, glutamate 77, aspartate 103, and asparagine 123.

Belongs to the class I-like SAM-binding methyltransferase superfamily. rRNA adenine N(6)-methyltransferase family. RsmA subfamily.

The protein resides in the cytoplasm. It catalyses the reaction adenosine(1518)/adenosine(1519) in 16S rRNA + 4 S-adenosyl-L-methionine = N(6)-dimethyladenosine(1518)/N(6)-dimethyladenosine(1519) in 16S rRNA + 4 S-adenosyl-L-homocysteine + 4 H(+). In terms of biological role, specifically dimethylates two adjacent adenosines (A1518 and A1519) in the loop of a conserved hairpin near the 3'-end of 16S rRNA in the 30S particle. May play a critical role in biogenesis of 30S subunits. This is Ribosomal RNA small subunit methyltransferase A from Rhodopseudomonas palustris (strain BisB5).